The following is a 1089-amino-acid chain: Ankyrin repeat and IBR domain-containing protein 1 (1089 aa).

Residue glycine 2 is the site of N-myristoyl glycine attachment. 2 ANK repeats span residues 45 to 74 (QHNT…NPNK) and 144 to 173 (KKNT…DLFA). The tract at residues 281–321 (CQRSGVQMPTPPPSGYNAWDTLPSPRTPRTTRSSVTSPDEI) is disordered. Residues 303 to 318 (PSPRTPRTTRSSVTSP) are compositionally biased toward low complexity. The tract at residues 329–569 (DTSLCDICMC…GGYYRCTRYE (241 aa)) is TRIAD supradomain. Residues cysteine 333, cysteine 336, cysteine 351, histidine 353, cysteine 356, cysteine 359, cysteine 378, cysteine 383, cysteine 465, cysteine 468, histidine 473, cysteine 478, cysteine 519, and cysteine 522 each coordinate Zn(2+). An RING-type 1 zinc finger spans residues 333–383 (CDICMCSISVFEDPVDMPCGHDFCRGCWESFLNLKIQEGEAHNIFCPAYDC). An IBR-type zinc finger spans residues 401–478 (DKRYLQFDIK…LGEAHEPCDC (78 aa)). An RING-type 2; atypical zinc finger spans residues 519-548 (CANCKSPIQKNEGCNHMQCAKCKYDFCWIC). Cysteine 532 is a catalytic residue. The Zn(2+) site is built by cysteine 537, cysteine 540, cysteine 545, cysteine 548, histidine 555, and cysteine 565. A coiled-coil region spans residues 575 to 640 (EEQSKEMTVE…RALKETEGGC (66 aa)). Serine 737 carries the phosphoserine modification. A disordered region spans residues 776 to 821 (RRGDVHSLLSNPPDPDEPSESTLDIPEGGSSSRRPGTSVVSSASMS). One can recognise a UIM domain in the interval 851–870 (EDDPNILLAIQLSLQESGLA). Residues serine 884 and serine 911 each carry the phosphoserine modification. 3 disordered regions span residues 889–912 (GTSL…ALSS), 927–964 (AEND…QDPN), and 1026–1089 (DASV…VHLV). 2 stretches are compositionally biased toward polar residues: residues 931–941 (PFSTDTLSSHP) and 1070–1082 (DVSS…SSDW).

The protein belongs to the RBR family.

It catalyses the reaction [E2 ubiquitin-conjugating enzyme]-S-ubiquitinyl-L-cysteine + [acceptor protein]-L-lysine = [E2 ubiquitin-conjugating enzyme]-L-cysteine + [acceptor protein]-N(6)-ubiquitinyl-L-lysine.. Might act as an E3 ubiquitin-protein ligase, or as part of E3 complex, which accepts ubiquitin from specific E2 ubiquitin-conjugating enzymes and then transfers it to substrates. This Homo sapiens (Human) protein is Ankyrin repeat and IBR domain-containing protein 1 (ANKIB1).